A 99-amino-acid polypeptide reads, in one-letter code: Duplicate procyclin (99 aa).

The polypeptide is Duplicate procyclin (Trypanosoma brucei brucei).